A 486-amino-acid polypeptide reads, in one-letter code: Glutamate--tRNA ligase 1 (486 aa).

The 'HIGH' region signature appears at 9 to 19 (PSPTGMLHIGG). A 'KMSKS' region motif is present at residues 259-263 (KLSKR). Residue lysine 262 participates in ATP binding.

The protein belongs to the class-I aminoacyl-tRNA synthetase family. Glutamate--tRNA ligase type 1 subfamily. Monomer.

Its subcellular location is the cytoplasm. It carries out the reaction tRNA(Glu) + L-glutamate + ATP = L-glutamyl-tRNA(Glu) + AMP + diphosphate. Its function is as follows. Catalyzes the attachment of glutamate to tRNA(Glu) in a two-step reaction: glutamate is first activated by ATP to form Glu-AMP and then transferred to the acceptor end of tRNA(Glu). The protein is Glutamate--tRNA ligase 1 of Hyphomonas neptunium (strain ATCC 15444).